An 80-amino-acid polypeptide reads, in one-letter code: Raniseptin-6 (80 aa).

Positions 1-22 (MAFLKKSLFLVLFLGIVSLSIC) are cleaved as a signal peptide. Positions 23 to 49 (EEEKREGEEEEKQEEENEELSEEELRE) are excised as a propeptide.

It belongs to the frog skin active peptide (FSAP) family. Dermaseptin subfamily. In terms of tissue distribution, expressed by the skin glands.

The protein localises to the secreted. Functionally, has antibacterial activity. The sequence is that of Raniseptin-6 from Boana raniceps (Chaco tree frog).